Consider the following 248-residue polypeptide: Coproheme decarboxylase (248 aa).

Fe-coproporphyrin III is bound by residues Arg130, 144 to 148, His171, Gln184, and Ser222; that span reads YPMDK. Residue Tyr144 is part of the active site.

The protein belongs to the ChdC family. Type 1 subfamily. In terms of assembly, homopentamer. It depends on Fe-coproporphyrin III as a cofactor.

The catalysed reaction is Fe-coproporphyrin III + 2 H2O2 + 2 H(+) = heme b + 2 CO2 + 4 H2O. It carries out the reaction Fe-coproporphyrin III + H2O2 + H(+) = harderoheme III + CO2 + 2 H2O. It catalyses the reaction harderoheme III + H2O2 + H(+) = heme b + CO2 + 2 H2O. Its pathway is porphyrin-containing compound metabolism; protoheme biosynthesis. Involved in coproporphyrin-dependent heme b biosynthesis. Catalyzes the decarboxylation of Fe-coproporphyrin III (coproheme) to heme b (protoheme IX), the last step of the pathway. The reaction occurs in a stepwise manner with a three-propionate intermediate. The sequence is that of Coproheme decarboxylase from Geobacillus kaustophilus (strain HTA426).